The chain runs to 929 residues: Band 4.1-like protein 3 (929 aa).

Methionine 1 is subject to N-acetylmethionine. The tract at residues 1 to 72 is disordered; the sequence is MTTESGSDSE…STPVKREIGD (72 aa). Threonine 2 is subject to N-acetylthreonine; in Band 4.1-like protein 3, N-terminally processed. Residues 20-33 are compositionally biased toward low complexity; the sequence is QEAAGPQGQAGAQP. Position 96 is a phosphoserine (serine 96). Residues 118-399 form the FERM domain; it reads MQCKVTLLDG…EHHTFFRLLL (282 aa). Positions 402–528 are hydrophilic; it reads APPKKFLTLG…PVTALRHEGK (127 aa). Serine 428, serine 451, and serine 486 each carry phosphoserine. Positions 490 to 554 are disordered; that stretch reads LITTVTPEKK…TESDQEEDAE (65 aa). At threonine 495 the chain carries Phosphothreonine. Positions 496–516 are enriched in basic and acidic residues; sequence PEKKAEEERVEEEDRRKKAEE. Phosphothreonine is present on threonine 518. Residues 523 to 536 are compositionally biased toward basic and acidic residues; that stretch reads LRHEGKTDSERTDT. A phosphoserine mark is found at histidine 525 and serine 543. Phosphothreonine is present on threonine 545. At serine 547 the chain carries Phosphoserine. Positions 559 to 602 are spectrin--actin-binding; that stretch reads DLDKTQDELMKHQTNISELKRTFLETSTETALTNEWEKRLSTSP. 3 disordered regions span residues 608–630, 665–689, and 705–807; these read RQEDAPMIEPLVPEETKQSSGEK, LETKTEPVEAEVESTPHPQPLSTEK, and VHAS…SPGG. Threonine 725 carries the phosphothreonine modification. The segment covering 726 to 737 has biased composition (basic and acidic residues); that stretch reads PTDRRHTGKGKE. Positions 777–929 are C-terminal (CTD); it reads RTSEGLEQKS…TEITPEDGED (153 aa). The segment covering 789–802 has biased composition (low complexity); it reads ESSTVRVESTSVGS. A phosphoserine mark is found at serine 802 and serine 804. Phosphothreonine is present on threonine 923.

In terms of assembly, interacts (via FERM domain) with CADM1. Interacts (via FERM domain) with PRMT3; the interaction is direct and inhibits the protein-arginine N-methyltransferase activity of PRMT3. Interacts with PRMT5. Interacts with PRMT6. As to quaternary structure, has the complete spectrin--actin-binding (SAB) domain and fully interacts with spectrin and actin. Detected in brain (at protein level). Highest expression in brain, lower in testis, adrenal gland, heart and kidney. Also present in muscle and epithelial cells. Isoform 1 is expressed in brain, isoform 2 is expressed in heart and isoform 3 is mostly expressed in kidney but also in heart and brain. Isoform 6 seems to be most abundant in kidney while isoform 4 and isoform 5 are predominantly expressed in heart and brain.

It localises to the cytoplasm. The protein resides in the cytoskeleton. The protein localises to the cell membrane. It is found in the cell junction. In terms of biological role, tumor suppressor that inhibits cell proliferation and promotes apoptosis. Modulates the activity of protein arginine N-methyltransferases, including PRMT3 and PRMT5. The polypeptide is Band 4.1-like protein 3 (Mus musculus (Mouse)).